The chain runs to 373 residues: Mannitol-1-phosphate 5-dehydrogenase (373 aa).

An NAD(+)-binding site is contributed by A3–G14.

Belongs to the mannitol dehydrogenase family.

It carries out the reaction D-mannitol 1-phosphate + NAD(+) = beta-D-fructose 6-phosphate + NADH + H(+). This chain is Mannitol-1-phosphate 5-dehydrogenase (mtlD), found in Bacillus subtilis (strain 168).